A 326-amino-acid polypeptide reads, in one-letter code: 4-hydroxy-3-methylbut-2-enyl diphosphate reductase (326 aa).

[4Fe-4S] cluster is bound at residue cysteine 22. (2E)-4-hydroxy-3-methylbut-2-enyl diphosphate contacts are provided by histidine 51 and histidine 84. The dimethylallyl diphosphate site is built by histidine 51 and histidine 84. Isopentenyl diphosphate contacts are provided by histidine 51 and histidine 84. [4Fe-4S] cluster is bound at residue cysteine 106. Histidine 134 provides a ligand contact to (2E)-4-hydroxy-3-methylbut-2-enyl diphosphate. Histidine 134 serves as a coordination point for dimethylallyl diphosphate. Isopentenyl diphosphate is bound at residue histidine 134. The active-site Proton donor is the glutamate 136. Threonine 174 contributes to the (2E)-4-hydroxy-3-methylbut-2-enyl diphosphate binding site. Cysteine 204 is a [4Fe-4S] cluster binding site. (2E)-4-hydroxy-3-methylbut-2-enyl diphosphate-binding residues include serine 232, serine 233, asparagine 234, and serine 276. Positions 232, 233, 234, and 276 each coordinate dimethylallyl diphosphate. Residues serine 232, serine 233, asparagine 234, and serine 276 each coordinate isopentenyl diphosphate.

This sequence belongs to the IspH family. Requires [4Fe-4S] cluster as cofactor.

The enzyme catalyses isopentenyl diphosphate + 2 oxidized [2Fe-2S]-[ferredoxin] + H2O = (2E)-4-hydroxy-3-methylbut-2-enyl diphosphate + 2 reduced [2Fe-2S]-[ferredoxin] + 2 H(+). It carries out the reaction dimethylallyl diphosphate + 2 oxidized [2Fe-2S]-[ferredoxin] + H2O = (2E)-4-hydroxy-3-methylbut-2-enyl diphosphate + 2 reduced [2Fe-2S]-[ferredoxin] + 2 H(+). It functions in the pathway isoprenoid biosynthesis; dimethylallyl diphosphate biosynthesis; dimethylallyl diphosphate from (2E)-4-hydroxy-3-methylbutenyl diphosphate: step 1/1. The protein operates within isoprenoid biosynthesis; isopentenyl diphosphate biosynthesis via DXP pathway; isopentenyl diphosphate from 1-deoxy-D-xylulose 5-phosphate: step 6/6. In terms of biological role, catalyzes the conversion of 1-hydroxy-2-methyl-2-(E)-butenyl 4-diphosphate (HMBPP) into a mixture of isopentenyl diphosphate (IPP) and dimethylallyl diphosphate (DMAPP). Acts in the terminal step of the DOXP/MEP pathway for isoprenoid precursor biosynthesis. This Bordetella bronchiseptica (strain ATCC BAA-588 / NCTC 13252 / RB50) (Alcaligenes bronchisepticus) protein is 4-hydroxy-3-methylbut-2-enyl diphosphate reductase.